A 392-amino-acid chain; its full sequence is MSNDYYEILGVSHDASADEIKKAYRRKAMKLHPDVAGPGSEEEFKKVQEAYEILQDPQKRAVFDRGGDPNARMGGFGEGGFSSAGFDFTNLVDAMFGGSSPFGSGGGRGPRSRTRRGQDALVRMRLSLAEAVFGVTKSLEVDTAVVCPKCQGKGAQSGSEPVTCDTCQGRGEVITVQRSFLGDIRTSQPCPTCHGYGTVIPDPCQECSGEGRVRTTRTINVKIPAGVADGNRIHLDSRGEVGPGGGPAGDLYIEMTVSPHDVFTRHGDDLEMVVTIPMTAAALGTKVPMHTLEADREDFAEDTKTVTVEVPAGTQSGTRIVVSERGVPRLRRNGRGDLGVTFIVQTPTKLDSHQKDLLRQLAEAREETNASASVEKSGGRGMFSRIKEAFGG.

The J domain occupies 4-67; sequence DYYEILGVSH…QKRAVFDRGG (64 aa). The segment at 134–216 adopts a CR-type zinc-finger fold; that stretch reads GVTKSLEVDT…CSGEGRVRTT (83 aa). 8 residues coordinate Zn(2+): Cys147, Cys150, Cys164, Cys167, Cys190, Cys193, Cys204, and Cys207. 4 CXXCXGXG motif repeats span residues 147–154, 164–171, 190–197, and 204–211; these read CPKCQGKG, CDTCQGRG, CPTCHGYG, and CQECSGEG. The disordered stretch occupies residues 367 to 392; that stretch reads ETNASASVEKSGGRGMFSRIKEAFGG.

It belongs to the DnaJ family. In terms of assembly, homodimer. Zn(2+) is required as a cofactor.

It localises to the cytoplasm. Participates actively in the response to hyperosmotic and heat shock by preventing the aggregation of stress-denatured proteins and by disaggregating proteins, also in an autonomous, DnaK-independent fashion. Unfolded proteins bind initially to DnaJ; upon interaction with the DnaJ-bound protein, DnaK hydrolyzes its bound ATP, resulting in the formation of a stable complex. GrpE releases ADP from DnaK; ATP binding to DnaK triggers the release of the substrate protein, thus completing the reaction cycle. Several rounds of ATP-dependent interactions between DnaJ, DnaK and GrpE are required for fully efficient folding. Also involved, together with DnaK and GrpE, in the DNA replication of plasmids through activation of initiation proteins. This Cutibacterium acnes (strain DSM 16379 / KPA171202) (Propionibacterium acnes) protein is Chaperone protein DnaJ 1.